The chain runs to 263 residues: Putative aliphatic sulfonates transport permease protein SsuC (263 aa).

Residues 1 to 13 (MATPVKKWLLRVA) lie on the Cytoplasmic side of the membrane. The chain crosses the membrane as a helical span at residues 14 to 34 (PWFLPVGIVAVWQLASSVGWL). The Periplasmic portion of the chain corresponds to 35-43 (STRILPSPE). Residues 44–64 (GVVTAFWTLSASGELWQHLAI) form a helical membrane-spanning segment. Residues 58 to 242 (LWQHLAISSW…LLGKLADVSA (185 aa)) form the ABC transmembrane type-1 domain. Over 65 to 68 (SSWR) the chain is Cytoplasmic. The helical transmembrane segment at 69–89 (ALIGFSIGGSLGLILGLISGL) threads the bilayer. The Periplasmic segment spans residues 90 to 102 (SRWGERLLDTSIQ). The chain crosses the membrane as a helical span at residues 103 to 122 (MLRNVPHLALIPLVILWFGI). Residues 123 to 125 (DES) are Cytoplasmic-facing. A helical transmembrane segment spans residues 126–148 (AKIFLVALGTLFPIYINTWHGIR). Residues 149–164 (NIDRGLVEMARSYGLS) lie on the Periplasmic side of the membrane. Residues 165-185 (GIPLFIHVILPGALPSIMVGV) form a helical membrane-spanning segment. Over 186–187 (RF) the chain is Cytoplasmic. The chain crosses the membrane as a helical span at residues 188-208 (ALGLMWLTLIVAETISANSGI). Over 209-217 (GYLAMNARE) the chain is Periplasmic. Residues 218-238 (FLQTDVVVVAIILYALLGKLA) traverse the membrane as a helical segment. Residues 239-263 (DVSAQLLERLWLRWNPAYHLKEATV) lie on the Cytoplasmic side of the membrane.

This sequence belongs to the binding-protein-dependent transport system permease family. CysTW subfamily.

The protein localises to the cell inner membrane. Part of a binding-protein-dependent transport system for aliphatic sulfonates. Probably responsible for the translocation of the substrate across the membrane. The polypeptide is Putative aliphatic sulfonates transport permease protein SsuC (ssuC) (Escherichia coli (strain K12)).